The sequence spans 93 residues: Small ribosomal subunit protein uS19 (93 aa).

Belongs to the universal ribosomal protein uS19 family.

Functionally, protein S19 forms a complex with S13 that binds strongly to the 16S ribosomal RNA. The sequence is that of Small ribosomal subunit protein uS19 (rpsS) from Helicobacter pylori (strain ATCC 700392 / 26695) (Campylobacter pylori).